We begin with the raw amino-acid sequence, 248 residues long: Adenosylcobinamide-GDP ribazoletransferase (248 aa).

The next 6 membrane-spanning stretches (helical) occupy residues 34 to 54, 58 to 78, 113 to 133, 139 to 159, 185 to 205, and 227 to 247; these read LVFA…LFYI, FFPP…LTGG, AVLA…SIPL, ALLL…GSTV, IIYF…LAAA, and DILG…FYLF.

This sequence belongs to the CobS family. Requires Mg(2+) as cofactor.

It localises to the cell membrane. The enzyme catalyses alpha-ribazole + adenosylcob(III)inamide-GDP = adenosylcob(III)alamin + GMP + H(+). It carries out the reaction alpha-ribazole 5'-phosphate + adenosylcob(III)inamide-GDP = adenosylcob(III)alamin 5'-phosphate + GMP + H(+). The protein operates within cofactor biosynthesis; adenosylcobalamin biosynthesis; adenosylcobalamin from cob(II)yrinate a,c-diamide: step 7/7. Joins adenosylcobinamide-GDP and alpha-ribazole to generate adenosylcobalamin (Ado-cobalamin). Also synthesizes adenosylcobalamin 5'-phosphate from adenosylcobinamide-GDP and alpha-ribazole 5'-phosphate. The chain is Adenosylcobinamide-GDP ribazoletransferase from Acetivibrio thermocellus (strain ATCC 27405 / DSM 1237 / JCM 9322 / NBRC 103400 / NCIMB 10682 / NRRL B-4536 / VPI 7372) (Clostridium thermocellum).